Reading from the N-terminus, the 429-residue chain is Glutamate-1-semialdehyde 2,1-aminomutase 1 (429 aa).

An N6-(pyridoxal phosphate)lysine modification is found at Lys-267.

This sequence belongs to the class-III pyridoxal-phosphate-dependent aminotransferase family. HemL subfamily. As to quaternary structure, homodimer. Pyridoxal 5'-phosphate serves as cofactor.

The protein resides in the cytoplasm. It carries out the reaction (S)-4-amino-5-oxopentanoate = 5-aminolevulinate. The protein operates within porphyrin-containing compound metabolism; protoporphyrin-IX biosynthesis; 5-aminolevulinate from L-glutamyl-tRNA(Glu): step 2/2. The polypeptide is Glutamate-1-semialdehyde 2,1-aminomutase 1 (Staphylococcus carnosus (strain TM300)).